Here is a 121-residue protein sequence, read N- to C-terminus: DNA-directed RNA polymerase subunit omega (121 aa).

The protein belongs to the RNA polymerase subunit omega family. As to quaternary structure, the RNAP catalytic core consists of 2 alpha, 1 beta, 1 beta' and 1 omega subunit. When a sigma factor is associated with the core the holoenzyme is formed, which can initiate transcription.

It carries out the reaction RNA(n) + a ribonucleoside 5'-triphosphate = RNA(n+1) + diphosphate. Functionally, promotes RNA polymerase assembly. Latches the N- and C-terminal regions of the beta' subunit thereby facilitating its interaction with the beta and alpha subunits. The chain is DNA-directed RNA polymerase subunit omega from Syntrophobacter fumaroxidans (strain DSM 10017 / MPOB).